The primary structure comprises 332 residues: Arrestin domain-containing protein 5 (332 aa).

A disordered region spans residues serine 311 to asparagine 332.

The protein belongs to the arrestin family.

The protein resides in the membrane. Plays an essential role in spermatogenesis. May be involved in the anchoring of the sperm head to the tail during spermatogenesis by affecting SEC22A-mediated SUN5 and NDC1 transport and localization. In Bos taurus (Bovine), this protein is Arrestin domain-containing protein 5 (ARRDC5).